Here is a 369-residue protein sequence, read N- to C-terminus: MASLHPPSFAYMRDGRNLSLAESVPAEIMHMVDPYWYQWPPLEPMWFGIIGFVIAILGTMSLAGNFIVMYIFTSSKGLRTPSNMFVVNLAFSDFMMMFTMFPPVVLNGFYGTWIMGPFLCELYGMFGSLFGCVSIWSMTLIAYDRYCVIVKGMARKPLTATAAVLRLMVVWTICGAWALMPLFGWNRYVPEGNMTACGTDYFAKDWWNRSYIIVYSLWVYLTPLLTIIFSYWHIMKAVAAHEKAMREQAKKMNVASLRNSEADKSKAIEIKLAKVALTTISLWFFAWTPYTIINYAGIFESMHLSPLSTICGSVFAKANAVCNPIVYGLSHPKYKQVLREKMPCLACGKDDLTSDSRTQATAEISESQA.

At 1–46 the chain is on the extracellular side; it reads MASLHPPSFAYMRDGRNLSLAESVPAEIMHMVDPYWYQWPPLEPMW. Asparagine 17 is a glycosylation site (N-linked (GlcNAc...) asparagine). The helical transmembrane segment at 47-71 threads the bilayer; sequence FGIIGFVIAILGTMSLAGNFIVMYI. Over 72-83 the chain is Cytoplasmic; the sequence is FTSSKGLRTPSN. Residues 84-109 traverse the membrane as a helical segment; the sequence is MFVVNLAFSDFMMMFTMFPPVVLNGF. Residues 110-123 are Extracellular-facing; that stretch reads YGTWIMGPFLCELY. Cysteine 120 and cysteine 197 form a disulfide bridge. The helical transmembrane segment at 124 to 143 threads the bilayer; sequence GMFGSLFGCVSIWSMTLIAY. The Cytoplasmic portion of the chain corresponds to 144 to 162; that stretch reads DRYCVIVKGMARKPLTATA. Residues 163–186 traverse the membrane as a helical segment; the sequence is AVLRLMVVWTICGAWALMPLFGWN. Residues 187–210 lie on the Extracellular side of the membrane; sequence RYVPEGNMTACGTDYFAKDWWNRS. Residues asparagine 193 and asparagine 208 are each glycosylated (N-linked (GlcNAc...) asparagine). Residues 211 to 238 form a helical membrane-spanning segment; the sequence is YIIVYSLWVYLTPLLTIIFSYWHIMKAV. Residues 239-274 are Cytoplasmic-facing; sequence AAHEKAMREQAKKMNVASLRNSEADKSKAIEIKLAK. Residues 275 to 298 form a helical membrane-spanning segment; it reads VALTTISLWFFAWTPYTIINYAGI. The Extracellular portion of the chain corresponds to 299 to 305; that stretch reads FESMHLS. Residues 306–330 traverse the membrane as a helical segment; sequence PLSTICGSVFAKANAVCNPIVYGLS. Lysine 317 bears the N6-(retinylidene)lysine mark. Over 331 to 369 the chain is Cytoplasmic; that stretch reads HPKYKQVLREKMPCLACGKDDLTSDSRTQATAEISESQA.

Belongs to the G-protein coupled receptor 1 family. Opsin subfamily. Phosphorylated on some or all of the serine and threonine residues present in the C-terminal region. As to expression, each Drosophila eye is composed of 800 facets or ommatidia. Each ommatidium contains 8 photoreceptor cells (R1-R8), the R1 to R6 cells are outer cells, while R7 and R8 are inner cells. Rh6 is expressed in a subset of R8 cells, most likely expressed in the subset of R8 cells paired with Rh4-expressing R7 cells (R7y).

It localises to the membrane. In terms of biological role, visual pigments are the light-absorbing molecules that mediate vision. They consist of an apoprotein, opsin, covalently linked to cis-retinal. This Drosophila melanogaster (Fruit fly) protein is Opsin Rh6 (Rh6).